Here is a 338-residue protein sequence, read N- to C-terminus: MFQAFPGDYDSGSRCSSSPSAESQYLSSVDSFGSPPTAAASQECAGLGEMPGSFVPTVTAITTSQDLQWLVQPTLISSMAQSQGQPLASQPPVVDPYDMPGTSYSTPGMSGYSSGGASGSGGPSTSGTTSGPGPARPARARPRRPREETLTPEEEEKRRVRRERNKLAAAKCRNRRRELTDRLQAETDQLEEEKAELESEIAELQKEKERLEFVLVAHKPGCKIPYEEGPGPGPLAEVRDLPGSAPAKEDGFSWLLPPPPPPPLPFQTSQDAPPNLTASLFTHSEVQVLGDPFPVVNPSYTSSFVLTCPEVSAFAGAQRTSGSDQPSDPLNSPSLLAL.

4 disordered regions span residues 1 to 54, 79 to 191, 222 to 276, and 316 to 338; these read MFQA…PGSF, MAQS…DQLE, CKIP…PPNL, and GAQR…LLAL. 2 stretches are compositionally biased toward polar residues: residues 13 to 31 and 79 to 88; these read SRCS…SVDS and MAQSQGQPLA. Ser27 is modified (phosphoserine). The span at 113-124 shows a compositional bias: gly residues; sequence SSGGASGSGGPS. Residues 125-137 are compositionally biased toward low complexity; the sequence is TSGTTSGPGPARP. One can recognise a bZIP domain in the interval 155–218; sequence EEKRRVRRER…ERLEFVLVAH (64 aa). The tract at residues 157 to 182 is basic motif; it reads KRRVRRERNKLAAAKCRNRRRELTDR. Positions 183-211 are leucine-zipper; that stretch reads LQAETDQLEEEKAELESEIAELQKEKERL. Over residues 256–265 the composition is skewed to pro residues; the sequence is LPPPPPPPLP. Composition is skewed to polar residues over residues 266 to 276 and 318 to 338; these read FQTSQDAPPNL and QRTS…LLAL.

This sequence belongs to the bZIP family. Fos subfamily. Heterodimer; binds to DNA as heterodimer. Component of an AP-1 transcription factor complex; composed of FOS-JUN heterodimers. As part of the AP-1 transcription factor complex, forms heterodimers with JUN, JUNB or JUND, thereby binding to the AP-1 consensus sequence and stimulating transcription. Interacts with the BAF multiprotein chromatin-remodeling complex subunits SMARCB1 and SMARCD1. Interacts with ARID1A and JUN. As to quaternary structure, homodimer under oxidizing conditions and monomer under reducing conditions (in vitro). Heterodimer; binds to DNA as heterodimer. Forms heterodimers with JUNB, JUN or JUND; thereby binding to the AP-1 consensus sequence but does not stimulate transcription. Forms heterodimers with JUND under oxidizing conditions. In terms of processing, phosphorylated. Phosphorylated at Ser-27 by CSNK2A1; phosphorylation increases protein stability and transactivation potential. As to expression, expressed in the nucleus accumbens of the striatum (at protein level).

The protein resides in the nucleus. Its function is as follows. Heterodimerizes with proteins of the JUN family to form an AP-1 transcription factor complex, thereby enhancing their DNA binding activity to gene promoters containing an AP-1 consensus sequence 5'-TGA[GC]TCA-3' and enhancing their transcriptional activity. As part of the AP-1 complex, facilitates enhancer selection together with cell-type-specific transcription factors by collaboratively binding to nucleosomal enhancers and recruiting the SWI/SNF (BAF) chromatin remodeling complex to establish accessible chromatin. Together with JUN, plays a role in activation-induced cell death of T cells by binding to the AP-1 promoter site of FASLG/CD95L, and inducing its transcription in response to activation of the TCR/CD3 signaling pathway. Exhibits transactivation activity in vitro. Involved in the display of nurturing behavior towards newborns. May play a role in neurogenesis in the hippocampus and in learning and memory-related tasks by regulating the expression of various genes involved in neurogenesis, depression and epilepsy. Implicated in behavioral responses related to morphine reward and spatial memory. In terms of biological role, exhibits lower transactivation activity than isoform 1 in vitro. The heterodimer with JUN does not display any transcriptional activity, and may thereby act as an transcriptional inhibitor. May be involved in the regulation of neurogenesis in the hippocampus. May play a role in synaptic modifications in nucleus accumbens medium spiny neurons and thereby play a role in adaptive and pathological reward-dependent learning, including maladaptive responses involved in drug addiction. Seems to be more stably expressed with a half-life of ~9.5 hours in cell culture as compared to 1.5 hours half-life of isoform 1. In Homo sapiens (Human), this protein is Protein FosB (FOSB).